The sequence spans 265 residues: UPF0246 protein NT01EI_0662 (265 aa).

Belongs to the UPF0246 family.

This chain is UPF0246 protein NT01EI_0662, found in Edwardsiella ictaluri (strain 93-146).